The following is a 327-amino-acid chain: Putative gluconeogenesis factor (327 aa).

This sequence belongs to the gluconeogenesis factor family.

It is found in the cytoplasm. Required for morphogenesis under gluconeogenic growth conditions. The polypeptide is Putative gluconeogenesis factor (yjiF) (Lactococcus lactis subsp. lactis (strain IL1403) (Streptococcus lactis)).